Here is a 532-residue protein sequence, read N- to C-terminus: O-phosphoserine--tRNA(Cys) ligase (532 aa).

Substrate-binding positions include 188–190 (HMT), 233–235 (SAS), 275–276 (YY), and Asn327.

The protein belongs to the class-II aminoacyl-tRNA synthetase family. O-phosphoseryl-tRNA(Cys) synthetase subfamily. As to quaternary structure, homotetramer. Interacts with SepCysS.

It carries out the reaction tRNA(Cys) + O-phospho-L-serine + ATP = O-phospho-L-seryl-tRNA(Cys) + AMP + diphosphate. Functionally, catalyzes the attachment of O-phosphoserine (Sep) to tRNA(Cys). The chain is O-phosphoserine--tRNA(Cys) ligase from Methanocella arvoryzae (strain DSM 22066 / NBRC 105507 / MRE50).